The chain runs to 277 residues: Glycerol-3-phosphate acyltransferase (277 aa).

The next 5 membrane-spanning stretches (helical) occupy residues 3–23 (LFIF…AIIV), 55–75 (IMVM…AKLL), 79–99 (PVTV…PVFF), 111–131 (IGAL…TWLL), and 155–175 (LILV…ILVL). The interval 207 to 277 (SPATSAEQEF…PKTKTVKEKE (71 aa)) is disordered. A compositionally biased stretch (basic and acidic residues) spans 216-239 (FPGKEVIDTNIDETEKTEQAEAVK). 2 stretches are compositionally biased toward basic residues: residues 240–253 (KPKA…AKKT) and 262–271 (KPRSTKPKTK).

Belongs to the PlsY family. Probably interacts with PlsX.

Its subcellular location is the cell inner membrane. It carries out the reaction an acyl phosphate + sn-glycerol 3-phosphate = a 1-acyl-sn-glycero-3-phosphate + phosphate. It functions in the pathway lipid metabolism; phospholipid metabolism. Catalyzes the transfer of an acyl group from acyl-phosphate (acyl-PO(4)) to glycerol-3-phosphate (G3P) to form lysophosphatidic acid (LPA). This enzyme utilizes acyl-phosphate as fatty acyl donor, but not acyl-CoA or acyl-ACP. This is Glycerol-3-phosphate acyltransferase from Legionella pneumophila (strain Paris).